Reading from the N-terminus, the 428-residue chain is Enolase (428 aa).

Residue Q163 participates in (2R)-2-phosphoglycerate binding. E205 (proton donor) is an active-site residue. Mg(2+)-binding residues include D242, E285, and D312. Positions 337, 366, 367, and 388 each coordinate (2R)-2-phosphoglycerate. Catalysis depends on K337, which acts as the Proton acceptor.

It belongs to the enolase family. The cofactor is Mg(2+).

The protein resides in the cytoplasm. It is found in the secreted. It localises to the cell surface. It carries out the reaction (2R)-2-phosphoglycerate = phosphoenolpyruvate + H2O. The protein operates within carbohydrate degradation; glycolysis; pyruvate from D-glyceraldehyde 3-phosphate: step 4/5. Functionally, catalyzes the reversible conversion of 2-phosphoglycerate (2-PG) into phosphoenolpyruvate (PEP). It is essential for the degradation of carbohydrates via glycolysis. This is Enolase from Nitrosomonas europaea (strain ATCC 19718 / CIP 103999 / KCTC 2705 / NBRC 14298).